The sequence spans 502 residues: Maturase K (502 aa).

The protein belongs to the intron maturase 2 family. MatK subfamily.

It is found in the plastid. It localises to the chloroplast. Its function is as follows. Usually encoded in the trnK tRNA gene intron. Probably assists in splicing its own and other chloroplast group II introns. The protein is Maturase K of Cephalotaxus fortunei (Chinese plum-yew).